Reading from the N-terminus, the 594-residue chain is UvrABC system protein C (594 aa).

Positions 13–99 (NSSGVYQYFD…IKQLKPKYNI (87 aa)) constitute a GIY-YIG domain. A UVR domain is found at 205–240 (DRLIKELELKMERLSSNLRFEEALIYRDRIAKIQKI).

Belongs to the UvrC family. Interacts with UvrB in an incision complex.

Its subcellular location is the cytoplasm. Functionally, the UvrABC repair system catalyzes the recognition and processing of DNA lesions. UvrC both incises the 5' and 3' sides of the lesion. The N-terminal half is responsible for the 3' incision and the C-terminal half is responsible for the 5' incision. This Helicobacter pylori (strain G27) protein is UvrABC system protein C.